We begin with the raw amino-acid sequence, 414 residues long: TAR DNA-binding protein 43 (414 aa).

2 RRM domains span residues 104–200 (SDLI…RCTE) and 191–262 (RKVF…NAEP). Basic and acidic residues predominate over residues 261–274 (EPKHNSNRQLERGG). 2 disordered regions span residues 261-303 (EPKH…GNNQ) and 341-373 (ASQQNQSGPSGNNQPQGNMQREQNQGFSSGNNS). Gly residues predominate over residues 275–303 (RFGGNPGGFGNQGGFGNSRGGGGGLGNNQ). Residues 342-373 (SQQNQSGPSGNNQPQGNMQREQNQGFSSGNNS) show a composition bias toward low complexity.

In terms of assembly, homodimer.

The protein localises to the nucleus. It is found in the cytoplasm. It localises to the stress granule. Its subcellular location is the mitochondrion. Probably involved in transcriptional repression. May play a role in the maintenance of the circadian clock periodicity. The chain is TAR DNA-binding protein 43 (TARDBP) from Gallus gallus (Chicken).